The sequence spans 227 residues: Ribosome-recycling factor, chloroplastic (227 aa).

The transit peptide at tryptophan 1–cysteine 34 directs the protein to the chloroplast. A coiled-coil region spans residues lysine 167–lysine 212.

This sequence belongs to the RRF family.

It is found in the plastid. The protein localises to the chloroplast. In terms of biological role, responsible for the release of ribosomes from messenger RNA at the termination of chloroplastic protein biosynthesis. This chain is Ribosome-recycling factor, chloroplastic (RRF), found in Daucus carota (Wild carrot).